We begin with the raw amino-acid sequence, 39 residues long: Cytochrome b559 subunit beta (39 aa).

A helical membrane pass occupies residues 14-30; sequence WLAVHGLAVPTVFFLGS. His-18 is a binding site for heme.

Belongs to the PsbE/PsbF family. As to quaternary structure, heterodimer of an alpha subunit and a beta subunit. PSII is composed of 1 copy each of membrane proteins PsbA, PsbB, PsbC, PsbD, PsbE, PsbF, PsbH, PsbI, PsbJ, PsbK, PsbL, PsbM, PsbT, PsbX, PsbY, PsbZ, Psb30/Ycf12, at least 3 peripheral proteins of the oxygen-evolving complex and a large number of cofactors. It forms dimeric complexes. It depends on heme b as a cofactor.

Its subcellular location is the plastid. The protein resides in the chloroplast thylakoid membrane. In terms of biological role, this b-type cytochrome is tightly associated with the reaction center of photosystem II (PSII). PSII is a light-driven water:plastoquinone oxidoreductase that uses light energy to abstract electrons from H(2)O, generating O(2) and a proton gradient subsequently used for ATP formation. It consists of a core antenna complex that captures photons, and an electron transfer chain that converts photonic excitation into a charge separation. The polypeptide is Cytochrome b559 subunit beta (Gnetum gnemon (Spanish joint-fir)).